We begin with the raw amino-acid sequence, 274 residues long: Rhamnulose-1-phosphate aldolase (274 aa).

Glu-117 is a catalytic residue. Zn(2+)-binding residues include His-141, His-143, and His-212.

Belongs to the aldolase class II family. RhaD subfamily. In terms of assembly, homotetramer. Requires Zn(2+) as cofactor.

Its subcellular location is the cytoplasm. It catalyses the reaction L-rhamnulose 1-phosphate = (S)-lactaldehyde + dihydroxyacetone phosphate. Its pathway is carbohydrate degradation; L-rhamnose degradation; glycerone phosphate from L-rhamnose: step 3/3. Catalyzes the reversible cleavage of L-rhamnulose-1-phosphate to dihydroxyacetone phosphate (DHAP) and L-lactaldehyde. This chain is Rhamnulose-1-phosphate aldolase, found in Yersinia pestis.